A 287-amino-acid polypeptide reads, in one-letter code: MASPDLLFNLRNLFYLGAYQAAINNSDVPGLDADAAAERDAIVFRSYVALGSYQLVISEIDSSAATSLQAVKLLALYLSGDKESAIVSLKEWLSDSAVGSNPVLRLIAGIIFMHEQDYTEALKHTHSGGTLDLHALNVQIFIKMHRSDYAEKQLKIMQQIDEDHTLTQLANAWLDIAVGGSKIREAYLIFQDFAEKYPMTGMVLNGKAVCCMHMGSFDEAETLLLEALNKDAKDPETLANLIVCNLHLGKPSSRYLSQLKLSHPDHVLVKRAVSAEDNFERALQAVA.

Belongs to the COPE family. As to quaternary structure, oligomeric complex that consists of at least the alpha, beta, beta', gamma, delta, epsilon and zeta subunits.

Its subcellular location is the cytoplasm. The protein localises to the golgi apparatus membrane. It is found in the cytoplasmic vesicle. The protein resides in the COPI-coated vesicle membrane. Functionally, the coatomer is a cytosolic protein complex that binds to dilysine motifs and reversibly associates with Golgi non-clathrin-coated vesicles, which further mediate biosynthetic protein transport from the ER, via the Golgi up to the trans Golgi network. The coatomer complex is required for budding from Golgi membranes, and is essential for the retrograde Golgi-to-ER transport of dilysine-tagged proteins. The protein is Coatomer subunit epsilon-1 (COPE1) of Oryza sativa subsp. japonica (Rice).